The chain runs to 357 residues: MEWLNVLESHGQALLGPVAWMVVWSLVKIVVIAVPIILCVAYLTYWERKMIGAMHVRLGPTRVGFKGLLQPFADVFKLLTKEVVVPSAANKVLFVVAPVVTLMPALAAWAVVPFGPEVVLANVNAGLLYIMAITSIGVYGVIVAGWASNSKYAFLGALRASAQMVSYELAIGFVLVSVLLVSGSLNMSEIVLGQGRGWFAERGLTFLSWNWLPLLPLFIIYVISAVAETNRHPFDVVEGESEIVAGHMVEYSGMAFALFFLGEYANMILLSCMAAIMFLGGWMSPIDIAPLNWIPGWIWLGIKTFCVVSMFVWFRASFPRYRYDQIMRLGWKIFIPLTGVWLVVLAIWMQTPWNIWR.

8 helical membrane passes run 18–38 (VAWMVVWSLVKIVVIAVPIIL), 92–112 (VLFVVAPVVTLMPALAAWAVV), 127–147 (LLYIMAITSIGVYGVIVAGWA), 165–185 (VSYELAIGFVLVSVLLVSGSL), 206–226 (FLSWNWLPLLPLFIIYVISAV), 268–288 (ILLSCMAAIMFLGGWMSPIDI), 294–314 (IPGWIWLGIKTFCVVSMFVWF), and 329–349 (LGWKIFIPLTGVWLVVLAIWM).

This sequence belongs to the complex I subunit 1 family. NDH-1 is composed of 14 different subunits. Subunits NuoA, H, J, K, L, M, N constitute the membrane sector of the complex.

The protein localises to the cell inner membrane. It carries out the reaction a quinone + NADH + 5 H(+)(in) = a quinol + NAD(+) + 4 H(+)(out). NDH-1 shuttles electrons from NADH, via FMN and iron-sulfur (Fe-S) centers, to quinones in the respiratory chain. The immediate electron acceptor for the enzyme in this species is believed to be ubiquinone. Couples the redox reaction to proton translocation (for every two electrons transferred, four hydrogen ions are translocated across the cytoplasmic membrane), and thus conserves the redox energy in a proton gradient. This subunit may bind ubiquinone. The polypeptide is NADH-quinone oxidoreductase subunit H (Bordetella bronchiseptica (strain ATCC BAA-588 / NCTC 13252 / RB50) (Alcaligenes bronchisepticus)).